We begin with the raw amino-acid sequence, 27 residues long: Voltage-dependent anion-selective channel protein (27 aa).

The protein belongs to the eukaryotic mitochondrial porin family. In terms of assembly, interacts with hexokinases. As to expression, photoreceptors.

The protein localises to the mitochondrion outer membrane. Its function is as follows. Forms a channel through the cell membrane that allows diffusion of small hydrophilic molecules. The sequence is that of Voltage-dependent anion-selective channel protein from Doryteuthis pealeii (Longfin inshore squid).